Reading from the N-terminus, the 397-residue chain is Elongation factor Tu 1 (397 aa).

Residues 10-207 (KPHVNVGTIG…TLDSYIPEPV (198 aa)) form the tr-type G domain. Residues 19-26 (GHVDHGKT) are G1. 19–26 (GHVDHGKT) lines the GTP pocket. T26 provides a ligand contact to Mg(2+). Residues 60 to 64 (GITIN) are G2. The G3 stretch occupies residues 81–84 (DCPG). Residues 81-85 (DCPGH) and 136-139 (NKAD) contribute to the GTP site. Residues 136-139 (NKAD) are G4. The interval 174–176 (SAL) is G5.

The protein belongs to the TRAFAC class translation factor GTPase superfamily. Classic translation factor GTPase family. EF-Tu/EF-1A subfamily. As to quaternary structure, monomer.

The protein resides in the cytoplasm. The catalysed reaction is GTP + H2O = GDP + phosphate + H(+). Its function is as follows. GTP hydrolase that promotes the GTP-dependent binding of aminoacyl-tRNA to the A-site of ribosomes during protein biosynthesis. This is Elongation factor Tu 1 from Stutzerimonas stutzeri (strain A1501) (Pseudomonas stutzeri).